A 357-amino-acid chain; its full sequence is Homoserine kinase (357 aa).

Lys133 is covalently cross-linked (Glycyl lysine isopeptide (Lys-Gly) (interchain with G-Cter in ubiquitin)).

Belongs to the GHMP kinase family. Homoserine kinase subfamily. In terms of assembly, homodimer.

It carries out the reaction L-homoserine + ATP = O-phospho-L-homoserine + ADP + H(+). It functions in the pathway amino-acid biosynthesis; L-threonine biosynthesis; L-threonine from L-aspartate: step 4/5. Its function is as follows. Commits homoserine to the threonine biosynthesis pathway by catalyzing its O-phosphorylation. The chain is Homoserine kinase (THR1) from Saccharomyces cerevisiae (strain ATCC 204508 / S288c) (Baker's yeast).